Reading from the N-terminus, the 306-residue chain is MEKALVLRFLAGVYYIKDLETQIILEAKKRGKLKTPDIKTTQKENSSASDFIIKVGDIVFYELSCDTYLIQSILPRKNELKRPNVANIDQVLLVFSLVKPNFQFLLLDKFLLILEQQKLDVVLVFSKIDLLEPENLTTMQQQLSYYQKFQPFYYINSKQKIGIDALKHIFANQITVLAGQTGVGKSTLLKALIPDAKLKTQEISESLGRGKHTTKNAQLYEFNGGFIVDTPGFSKLDLTTFCPRTLKNFYPDFVEHVCDCFFGESCLHLQEEKCGVKKSLENGKILPSRYQNYVSFYEEIKNQLKY.

One can recognise a CP-type G domain in the interval 77-236; sequence KNELKRPNVA…IVDTPGFSKL (160 aa). GTP contacts are provided by residues 126 to 129 and 179 to 187; these read SKID and GQTGVGKST. Positions 260, 266, 268, and 274 each coordinate Zn(2+).

It belongs to the TRAFAC class YlqF/YawG GTPase family. RsgA subfamily. In terms of assembly, monomer. Associates with 30S ribosomal subunit, binds 16S rRNA. Zn(2+) is required as a cofactor.

The protein localises to the cytoplasm. Its function is as follows. One of several proteins that assist in the late maturation steps of the functional core of the 30S ribosomal subunit. Helps release RbfA from mature subunits. May play a role in the assembly of ribosomal proteins into the subunit. Circularly permuted GTPase that catalyzes slow GTP hydrolysis, GTPase activity is stimulated by the 30S ribosomal subunit. The polypeptide is Small ribosomal subunit biogenesis GTPase RsgA (Onion yellows phytoplasma (strain OY-M)).